Here is a 187-residue protein sequence, read N- to C-terminus: Corticoliberin (187 aa).

An N-terminal signal peptide occupies residues 1–19 (MRLRLLVSAGMLLVALSSC). A propeptide spanning residues 20–144 (LPCRALLSRG…HQGALERERR (125 aa)) is cleaved from the precursor. 2 disordered regions span residues 75-94 (AARLSPNSTPLTAGRGSRPS) and 114-146 (QRSLDSRAEPAERGAEDALGGHQGALERERRSE). Residues 117–129 (LDSRAEPAERGAE) show a composition bias toward basic and acidic residues. The residue at position 185 (isoleucine 185) is an Isoleucine amide.

The protein belongs to the sauvagine/corticotropin-releasing factor/urotensin I family. Interacts (via C-terminus) with CRFR1 (via N-terminal extracellular domain). In terms of tissue distribution, expressed in parvocellular paraventricular nucleus of the hypothalamus and in medial accessory olivary nucleus.

It localises to the secreted. Its function is as follows. Hormone regulating the release of corticotropin from pituitary gland. Induces NLRP6 in intestinal epithelial cells, hence may influence gut microbiota profile. This chain is Corticoliberin (Crh), found in Mus musculus (Mouse).